Consider the following 105-residue polypeptide: UPF0148 protein PYRAB12700 (105 aa).

It belongs to the UPF0148 family.

The chain is UPF0148 protein PYRAB12700 from Pyrococcus abyssi (strain GE5 / Orsay).